The following is a 253-amino-acid chain: Glucosamine-6-phosphate deaminase (253 aa).

Residue Asp65 is the Proton acceptor; for enolization step of the active site. Asn133 (for ring-opening step) is an active-site residue. His135 (proton acceptor; for ring-opening step) is an active-site residue. Glu140 (for ring-opening step) is an active-site residue.

The protein belongs to the glucosamine/galactosamine-6-phosphate isomerase family. NagB subfamily.

It catalyses the reaction alpha-D-glucosamine 6-phosphate + H2O = beta-D-fructose 6-phosphate + NH4(+). It functions in the pathway amino-sugar metabolism; N-acetylneuraminate degradation; D-fructose 6-phosphate from N-acetylneuraminate: step 5/5. In terms of biological role, catalyzes the reversible isomerization-deamination of glucosamine 6-phosphate (GlcN6P) to form fructose 6-phosphate (Fru6P) and ammonium ion. This chain is Glucosamine-6-phosphate deaminase, found in Corynebacterium glutamicum (strain ATCC 13032 / DSM 20300 / JCM 1318 / BCRC 11384 / CCUG 27702 / LMG 3730 / NBRC 12168 / NCIMB 10025 / NRRL B-2784 / 534).